Reading from the N-terminus, the 579-residue chain is Matrix metalloproteinase-C (579 aa).

The signal sequence occupies residues 1–17 (MRLIYVIAILLVSTCQA). A propeptide spans 18-129 (GFFSSLVSRF…SRCGVTDAPL (112 aa)) (activation peptide). Positions 32–51 (NSSPSSSSSSSSFSNSRKPS) are disordered. A compositionally biased stretch (low complexity) spans 33 to 50 (SSPSSSSSSSSFSNSRKP). The Cysteine switch motif lies at 120–127 (SRCGVTDA). Zn(2+)-binding residues include cysteine 122, histidine 200, aspartate 202, histidine 215, and histidine 225. A glycan (N-linked (GlcNAc...) asparagine) is linked at asparagine 231. Histidine 254 serves as a coordination point for Zn(2+). Residue glutamate 255 is part of the active site. Histidine 258 and histidine 264 together coordinate Zn(2+). Residues 307 to 394 (SGRSSSGSDF…SSSGSSGGGC (88 aa)) are disordered. A compositionally biased stretch (gly residues) spans 315–324 (DFGGSSGGGS). The span at 325 to 341 (RTTARPTTTTRSWFGRF) shows a compositional bias: low complexity. Over residues 373–394 (WGSGSGSSGRGGSSSGSSGGGC) the composition is skewed to gly residues. Hemopexin repeat units follow at residues 395–437 (PSHI…FPSA) and 438–490 (PTPV…LGFS).

It belongs to the peptidase M10A family. Zn(2+) serves as cofactor.

It localises to the secreted. Its subcellular location is the extracellular space. It is found in the extracellular matrix. Its activity is regulated as follows. Inhibited by human TIMP1 and TIMP2 and the broad MMP inhibitors BB94 (Batimastat) and CT543. Functionally, metalloproteinase. In Caenorhabditis elegans, this protein is Matrix metalloproteinase-C.